The primary structure comprises 307 residues: Mycothiol acetyltransferase (307 aa).

N-acetyltransferase domains lie at 15–158 (HTLD…LAEP) and 164–307 (VTVR…RTES). Position 46 (Glu46) interacts with 1D-myo-inositol 2-(L-cysteinylamino)-2-deoxy-alpha-D-glucopyranoside. 90–92 (LVV) contributes to the acetyl-CoA binding site. Glu191, Lys230, and Glu239 together coordinate 1D-myo-inositol 2-(L-cysteinylamino)-2-deoxy-alpha-D-glucopyranoside. Acetyl-CoA contacts are provided by residues 243–245 (VGV) and 250–256 (QGGGLGK). A 1D-myo-inositol 2-(L-cysteinylamino)-2-deoxy-alpha-D-glucopyranoside-binding site is contributed by Tyr277.

It belongs to the acetyltransferase family. MshD subfamily. Monomer.

It catalyses the reaction 1D-myo-inositol 2-(L-cysteinylamino)-2-deoxy-alpha-D-glucopyranoside + acetyl-CoA = mycothiol + CoA + H(+). Its function is as follows. Catalyzes the transfer of acetyl from acetyl-CoA to desacetylmycothiol (Cys-GlcN-Ins) to form mycothiol. This is Mycothiol acetyltransferase from Streptomyces griseus subsp. griseus (strain JCM 4626 / CBS 651.72 / NBRC 13350 / KCC S-0626 / ISP 5235).